Consider the following 756-residue polypeptide: Serine/threonine-protein kinase CBK1 (756 aa).

2 disordered regions span residues 1–180 (MYNS…SYSS) and 242–261 (QQQQ…NNGT). The span at 23 to 34 (QQQDQQHQQQQQ) shows a compositional bias: low complexity. The span at 53 to 77 (FSSNYMKEQGSHQSLQEHLQRETGN) shows a compositional bias: polar residues. T109 carries the phosphothreonine modification. The segment covering 120–180 (HNNNSQSMVQ…TLRSNGSYSS (61 aa)) has biased composition (polar residues). The span at 242–255 (QQQQQQQSQSPVQS) shows a compositional bias: low complexity. Positions 352–672 (FHTVKVIGKG…ADEIKSHPFF (321 aa)) constitute a Protein kinase domain. Residues 358–366 (IGKGAFGEV) and K381 each bind ATP. D475 (proton acceptor) is an active-site residue. The region spanning 673–754 (RGVDWNTIRQ…SRFDYLTRKN (82 aa)) is the AGC-kinase C-terminal domain. Residues 707–732 (NVPDSPAMAQAAKQREQMTKQGGSAP) form a disordered region.

Belongs to the protein kinase superfamily. STE Ser/Thr protein kinase family. COT1 subfamily. Associates with PAG1/TAO3 and interacts with MOB2.

The catalysed reaction is L-seryl-[protein] + ATP = O-phospho-L-seryl-[protein] + ADP + H(+). It catalyses the reaction L-threonyl-[protein] + ATP = O-phospho-L-threonyl-[protein] + ADP + H(+). In terms of biological role, protein kinase that seems to play a role in the regulation of cell morphogenesis and proliferation. The chain is Serine/threonine-protein kinase CBK1 (CBK1) from Saccharomyces cerevisiae (strain ATCC 204508 / S288c) (Baker's yeast).